A 197-amino-acid polypeptide reads, in one-letter code: Imidazoleglycerol-phosphate dehydratase (197 aa).

It belongs to the imidazoleglycerol-phosphate dehydratase family.

The protein resides in the cytoplasm. It carries out the reaction D-erythro-1-(imidazol-4-yl)glycerol 3-phosphate = 3-(imidazol-4-yl)-2-oxopropyl phosphate + H2O. It functions in the pathway amino-acid biosynthesis; L-histidine biosynthesis; L-histidine from 5-phospho-alpha-D-ribose 1-diphosphate: step 6/9. The chain is Imidazoleglycerol-phosphate dehydratase from Teredinibacter turnerae (strain ATCC 39867 / T7901).